Here is a 704-residue protein sequence, read N- to C-terminus: Penicillin-binding protein H (704 aa).

A helical membrane pass occupies residues 23 to 43 (FFLAVFVLFTALIFKLGVVQI). Residues 197–223 (MNPNKSNSNGKNGALLDEKKNSSQRPK) are disordered. Low complexity predominate over residues 200 to 209 (NKSNSNGKNG). Residues 212–223 (LDEKKNSSQRPK) show a composition bias toward basic and acidic residues. The Acyl-ester intermediate role is filled by Ser-415.

The protein belongs to the transpeptidase family.

It is found in the cell membrane. It carries out the reaction Preferential cleavage: (Ac)2-L-Lys-D-Ala-|-D-Ala. Also transpeptidation of peptidyl-alanyl moieties that are N-acyl substituents of D-alanine.. It functions in the pathway cell wall biogenesis; peptidoglycan biosynthesis. Involved in the polymerization of peptidoglycan. Plays a redundant role with PBP-2A (pbpA) in determining the rod shape of the cell during vegetative growth and spore outgrowth. This Bacillus subtilis (strain 168) protein is Penicillin-binding protein H.